The chain runs to 64 residues: MAAVCDICGKGPGFGKSVSHSHRRTSRRWDPNIQTVHAVTRPGGNKKRLNVCTSCIKAGKITRG.

It belongs to the bacterial ribosomal protein bL28 family.

This Mycobacterium tuberculosis (strain ATCC 25618 / H37Rv) protein is Large ribosomal subunit protein bL28C.